The following is a 1480-amino-acid chain: UDP-N-acetylglucosamine--peptide N-acetylglucosaminyltransferase (1480 aa).

TPR repeat units follow at residues 38–71 (IFLYAIQGEISFKQKDWIQAFAAYEKAVAESKQK), 113–146 (VQVLAQLALLYLMCERYSEAEKLLSSIVESSTSN), 176–209 (ATILNNLAICNSKLGNHTLAFDQFQQALDIIKDP), and 288–321 (STICYNIGKLELTLGNLDRSVNHFKKSIEYQPSF). The span at 468–485 (PQEKESPKSDKIASEKPL) shows a compositional bias: basic and acidic residues. The tract at residues 468-497 (PQEKESPKSDKIASEKPLVESNPGRSRTPS) is disordered. TPR repeat units follow at residues 613-646 (YEPFYNLGNILKADEENKKALQYYSRAIELNPRF) and 648-680 (DGYLARGVLYAELHRFETAYLDFSKCIELDPDN). Residues 1093-1128 (LSLDGSDATSSSVDSGIGSRTHSEAPIGGGDKDEGA) are disordered. The segment covering 1099 to 1112 (DATSSSVDSGIGSR) has biased composition (polar residues). Residues Q1269, K1272, 1333-1336 (HIRR), 1351-1353 (GST), and D1357 contribute to the UDP site.

This sequence belongs to the glycosyltransferase 41 family. O-GlcNAc transferase subfamily.

It localises to the cytoplasm. Its subcellular location is the nucleus. It carries out the reaction L-seryl-[protein] + UDP-N-acetyl-alpha-D-glucosamine = 3-O-(N-acetyl-beta-D-glucosaminyl)-L-seryl-[protein] + UDP + H(+). The enzyme catalyses L-threonyl-[protein] + UDP-N-acetyl-alpha-D-glucosamine = 3-O-(N-acetyl-beta-D-glucosaminyl)-L-threonyl-[protein] + UDP + H(+). It participates in protein modification; protein glycosylation. Its function is as follows. Catalyzes the transfer of a single N-acetylglucosamine from UDP-GlcNAc to a serine or threonine residue in cytoplasmic and nuclear proteins resulting in their modification with a beta-linked N-acetylglucosamine (O-GlcNAc). In Giardia intestinalis (strain ATCC 50803 / WB clone C6) (Giardia lamblia), this protein is UDP-N-acetylglucosamine--peptide N-acetylglucosaminyltransferase.